A 334-amino-acid polypeptide reads, in one-letter code: N-acetyl-gamma-glutamyl-phosphate reductase (334 aa).

The active site involves Cys-154.

Belongs to the NAGSA dehydrogenase family. Type 1 subfamily.

The protein resides in the cytoplasm. The enzyme catalyses N-acetyl-L-glutamate 5-semialdehyde + phosphate + NADP(+) = N-acetyl-L-glutamyl 5-phosphate + NADPH + H(+). Its pathway is amino-acid biosynthesis; L-arginine biosynthesis; N(2)-acetyl-L-ornithine from L-glutamate: step 3/4. Its function is as follows. Catalyzes the NADPH-dependent reduction of N-acetyl-5-glutamyl phosphate to yield N-acetyl-L-glutamate 5-semialdehyde. This Escherichia coli O157:H7 protein is N-acetyl-gamma-glutamyl-phosphate reductase.